The chain runs to 297 residues: 2-phospho-L-lactate transferase (297 aa).

D49 lines the 7,8-didemethyl-8-hydroxy-5-deazariboflavin pocket.

The protein belongs to the CofD family. Homodimer. The cofactor is Mg(2+).

The catalysed reaction is (2S)-lactyl-2-diphospho-5'-guanosine + 7,8-didemethyl-8-hydroxy-5-deazariboflavin = oxidized coenzyme F420-0 + GMP + H(+). It participates in cofactor biosynthesis; coenzyme F420 biosynthesis. In terms of biological role, catalyzes the transfer of the 2-phospholactate moiety from (2S)-lactyl-2-diphospho-5'-guanosine to 7,8-didemethyl-8-hydroxy-5-deazariboflavin (FO) with the formation of oxidized coenzyme F420-0 and GMP. The sequence is that of 2-phospho-L-lactate transferase from Methanospirillum hungatei JF-1 (strain ATCC 27890 / DSM 864 / NBRC 100397 / JF-1).